A 356-amino-acid chain; its full sequence is Molybdenum import ATP-binding protein ModC (356 aa).

One can recognise an ABC transporter domain in the interval 1-232; the sequence is MEDIHARFHI…LDLPIRLGED (232 aa). 33-40 is a binding site for ATP; it reads GHSGSGKT. In terms of domain architecture, Mop spans 291–356; that stretch reads ETSVLNLLRG…VQVKSVALME (66 aa).

This sequence belongs to the ABC transporter superfamily. Molybdate importer (TC 3.A.1.8) family. As to quaternary structure, the complex is composed of two ATP-binding proteins (ModC), two transmembrane proteins (ModB) and a solute-binding protein (ModA).

It localises to the cell inner membrane. It carries out the reaction molybdate(out) + ATP + H2O = molybdate(in) + ADP + phosphate + H(+). Functionally, part of the ABC transporter complex ModABC involved in molybdenum import. Responsible for energy coupling to the transport system. The sequence is that of Molybdenum import ATP-binding protein ModC from Methylococcus capsulatus (strain ATCC 33009 / NCIMB 11132 / Bath).